A 397-amino-acid chain; its full sequence is MDVDLASVEVVFAQKLACGEPATRQRALRVLHDWIRDQSAKKHFDDADLMRLCKGLHYVMWMQDKMILQEELADRIGGLINIFTSEEEKVRFVACFLKSLSKEWPHIDRWRMDKFLMEVRRMVRACFTHLAELKWKKDIRDEYWKVFQETTISTDKSFNEALKFHFASILLDELDAAGGLTKKQVTACLKPYIELLGNKDISEYLFTSLYEEIFKTILQQKSDLITAVEEGEEMDQGGIEFSYKEIGALLFEVGKQEHLNAKRRKKIYDLVKKFDKSSRGQDPLHFETPVPKERLTRHDYEEAEKKAIVLANSFKQERKSSRKVKSQIKKRAREAAEAARQENGDDVPDDEIAEVKKGNGKKTAVPKVKKGRPLLKAKGVGKKRMVGGLKRKAGKKN.

Residues glutamate 334–asparagine 343 show a composition bias toward basic and acidic residues. The disordered stretch occupies residues glutamate 334–proline 366.

The protein belongs to the RRP1 family.

The protein localises to the nucleus. Functionally, may be involved in the generation of 28S rRNA. The chain is Ribosomal RNA processing protein 1 homolog from Caenorhabditis elegans.